A 149-amino-acid polypeptide reads, in one-letter code: Interleukin-2 (149 aa).

Residues 1–20 (MYRMQLLSCIALTLAVLANS) form the signal peptide. O-linked (GalNAc...) threonine glycosylation is present at Thr-23. Cys-78 and Cys-121 form a disulfide bridge. The N-linked (GlcNAc...) asparagine glycan is linked to Asn-106.

This sequence belongs to the IL-2 family.

It is found in the secreted. In terms of biological role, cytokine produced by activated CD4-positive helper T-cells and to a lesser extend activated CD8-positive T-cells and natural killer (NK) cells that plays pivotal roles in the immune response and tolerance. Binds to a receptor complex composed of either the high-affinity trimeric IL-2R (IL2RA/CD25, IL2RB/CD122 and IL2RG/CD132) or the low-affinity dimeric IL-2R (IL2RB and IL2RG). Interaction with the receptor leads to oligomerization and conformation changes in the IL-2R subunits resulting in downstream signaling starting with phosphorylation of JAK1 and JAK3. In turn, JAK1 and JAK3 phosphorylate the receptor to form a docking site leading to the phosphorylation of several substrates including STAT5. This process leads to activation of several pathways including STAT, phosphoinositide-3-kinase/PI3K and mitogen-activated protein kinase/MAPK pathways. Functions as a T-cell growth factor and can increase NK-cell cytolytic activity as well. Promotes strong proliferation of activated B-cells and subsequently immunoglobulin production. Plays a pivotal role in regulating the adaptive immune system by controlling the survival and proliferation of regulatory T-cells, which are required for the maintenance of immune tolerance. Moreover, participates in the differentiation and homeostasis of effector T-cell subsets, including Th1, Th2, Th17 as well as memory CD8-positive T-cells. The sequence is that of Interleukin-2 (IL2) from Equus caballus (Horse).